A 131-amino-acid chain; its full sequence is Antileukoproteinase (131 aa).

The first 25 residues, 1–25 (MKSCGLLPFTVLLALGILAPWTVEG), serve as a signal peptide directing secretion. 2 consecutive WAP domains span residues 29-77 (DAIK…VNPV) and 83-131 (VWRK…LPPM). Intrachain disulfides connect Cys36–Cys65, Cys44–Cys69, Cys52–Cys64, Cys58–Cys73, Cys90–Cys119, Cys97–Cys123, Cys106–Cys118, and Cys112–Cys127. An elastase inhibitory domain region spans residues 85-131 (RKPGRCVKTQARCMMLNPPNVCQRDGQCDGKYKCCEGICGKVCLPPM).

In terms of assembly, interacts with GRN; interaction protects progranulin from proteolysis. In terms of tissue distribution, detected in bronchial epithelial cells. Detected in bronchoalveolar fluid after infection with M.tuberculosis (at protein level). Highest expression in lung, spleen, intestine and epididymis with lower levels in liver and seminal vesicle. No expression in brain, heart, kidney and muscle.

The protein localises to the secreted. Functionally, acid-stable proteinase inhibitor with strong affinities for trypsin, chymotrypsin, elastase, and cathepsin G. Modulates the innate immune response after bacterial infection. Contributes to regulate the inflammatory and immune responses to the intracellular parasite L.major. Down-regulates responses to bacterial lipopolysaccharide (LPS). Plays a role in regulating the activation of NF-kappa-B and inflammatory responses. Has antimicrobial activity against mycobacteria, but not against salmonella. Contributes to normal resistance against infection by M.tuberculosis. Required for normal resistance to L.major. Required for normal wound healing, probably by preventing tissue damage by limiting protease activity. Together with ELANE, required for normal differentiation and proliferation of bone marrow myeloid cells. The polypeptide is Antileukoproteinase (Slpi) (Mus musculus (Mouse)).